A 359-amino-acid chain; its full sequence is Cytoplasmic tRNA 2-thiolation protein 2 (359 aa).

It belongs to the CTU2/NCS2 family.

It localises to the cytoplasm. It functions in the pathway tRNA modification; 5-methoxycarbonylmethyl-2-thiouridine-tRNA biosynthesis. Plays a central role in 2-thiolation of mcm(5)S(2)U at tRNA wobble positions of tRNA(Lys), tRNA(Glu) and tRNA(Gln). May act by forming a heterodimer with NCS6 that ligates sulfur from thiocarboxylated URM1 onto the uridine of tRNAs at wobble position. Prior mcm(5) tRNA modification by the elongator complex is required for 2-thiolation. May also be involved in protein urmylation. In Ajellomyces capsulatus (strain NAm1 / WU24) (Darling's disease fungus), this protein is Cytoplasmic tRNA 2-thiolation protein 2.